The primary structure comprises 389 residues: Chalcone synthase (389 aa).

The active site involves cysteine 164.

The protein belongs to the thiolase-like superfamily. Chalcone/stilbene synthases family.

It catalyses the reaction (E)-4-coumaroyl-CoA + 3 malonyl-CoA + 3 H(+) = 2',4,4',6'-tetrahydroxychalcone + 3 CO2 + 4 CoA. Its pathway is secondary metabolite biosynthesis; flavonoid biosynthesis. Functionally, the primary product of this enzyme is 4,2',4',6'-tetrahydroxychalcone (also termed naringenin-chalcone or chalcone) which can under specific conditions spontaneously isomerize into naringenin. In Casuarina glauca (Swamp oak), this protein is Chalcone synthase (CHS1).